Reading from the N-terminus, the 530-residue chain is Glutamate--cysteine ligase (530 aa).

It belongs to the glutamate--cysteine ligase type 1 family. Type 1 subfamily.

The catalysed reaction is L-cysteine + L-glutamate + ATP = gamma-L-glutamyl-L-cysteine + ADP + phosphate + H(+). The protein operates within sulfur metabolism; glutathione biosynthesis; glutathione from L-cysteine and L-glutamate: step 1/2. The sequence is that of Glutamate--cysteine ligase from Saccharophagus degradans (strain 2-40 / ATCC 43961 / DSM 17024).